The following is a 2507-amino-acid chain: Highly reducing polyketide synthase lcsB (2507 aa).

The Ketosynthase family 3 (KS3) domain occupies 2–393 (AEPIAVVGMA…GVNAHVIVES (392 aa)). The disordered stretch occupies residues 399-501 (NHDRGLSNGS…RNGYSGDDVE (103 aa)). Composition is skewed to polar residues over residues 405 to 414 (SNGSTTSSSP) and 470 to 488 (NDTPQSRSTPSNGDQTSHT). The malonyl-CoA:ACP transacylase (MAT) domain stretch occupies residues 581-900 (WVFTGQGAQW…DESLLQLAGK (320 aa)). The interval 953-1080 (HELLGSRVTE…GEARASVDKA (128 aa)) is N-terminal hotdog fold. Positions 953–1232 (HELLGSRVTE…FKASALTRSD (280 aa)) are dehydratase (DH) domain. The PKS/mFAS DH domain occupies 953 to 1234 (HELLGSRVTE…ASALTRSDDE (282 aa)). His984 acts as the Proton acceptor; for dehydratase activity in catalysis. The C-terminal hotdog fold stretch occupies residues 1092–1234 (ARTVDANEWY…ASALTRSDDE (143 aa)). Asp1151 serves as the catalytic Proton donor; for dehydratase activity. Residues 1402–1570 (LGHTNPRLRI…EMVAAGFAEP (169 aa)) are methyltransferase (CMet) domain. The segment at 1793–2105 (GLLHTMGWSQ…GGRHIGKIIV (313 aa)) is enoyl reductase (ER) (ER) domain. The ketoreductase (KR) domain stretch occupies residues 2130–2303 (SYLLVGGLGG…ASVIDIGVMG (174 aa)). Positions 2425 to 2503 (EESTVIIATA…SLGDYIRTAL (79 aa)) constitute a Carrier domain. Ser2463 is subject to O-(pantetheine 4'-phosphoryl)serine.

It functions in the pathway secondary metabolite biosynthesis. Its function is as follows. Highly reducing polyketide synthase; part of the gene cluster that mediates the biosynthesis of the lipopeptide antibiotics leucinostatins that show extensive biological activities, including antimalarial, antiviral, antibacterial, antifungal, and antitumor activities, as well as phytotoxic. Leucinostatin A contains nine amino acid residues, including the unusual amino acid 4-methyl-L-proline (MePro), 2-amino-6-hydroxy-4-methyl-8-oxodecanoic acid (AHyMeOA), 3-hydroxyleucine (HyLeu), alpha-aminoisobutyric acid (AIB), beta-Ala, a 4-methylhex-2-enoic acid at the N-terminus as well as a N1,N1-dimethylpropane-1,2-diamine (DPD) at the C-terminus. The biosynthesis of leucinostatins is probably initiated with the assembly of 4-methylhex-2-enoic acid by a reducing PKS. Two reducing polyketide synthases, lcsB and lcsC, have been identified in the cluster and it is not clear which is the one that assembles 4-methylhex-2-enoic acid since both contain KS, AT, DH, cMT, ER, KR and ACP domains. The polyketide residue might be transferred to the NRPS lcsA, mediated by two additional enzymes, the acyl-CoA ligase lcsD and the thioesterase lcsE. The linear polyketide carboxylic acid, which is released from PKS, is converted to a CoA thioester by lcsD, and then lcsE hydrolyzes the thiol bond and shuttles the polyketide intermediate to lcsA. The C domain of the first module catalyzed the condensation of 4-methylhex-2-enoic acid and MePro carried by domain A1, followed by successive condensations of nine amino acids to trigger the elongation of the linear peptide. A5 and A6 domains of lcsA are proposed to incorporate leucine, A2 AHyMeOA, and A3 incorporates HyLeu. A4, A7 and A8 incorporate AIB. The AHyMeOA in leucinostatin A activated by the A2 might be produced by the second PKS (lcsB or lcsC) present within the cluster. The MePro is probably produced via leucine cyclization and may originate from a separate pathway, independent of the cluster. Another nonproteinogenic amino acid, beta-Ala, could be produced by an aspartic acid decarboxylase also localized outside of the cluster. Two candidates are VFPBJ_01400 and VFPBJ_10476. The final peptide scaffold may be released by the NAD(P)H-dependent thioester reductase (TE) at the C-terminal region of lcsA. Transamination of the lcsA product by the transaminase lcsP may produce DPD at the C-terminus. Further hydroxylation steps performed alternatively by the cytochrome P450 monooxygenases lcsI, lcsK andr lcsN then yield the non-methylated leucinostatins precursor. It is also possible that leucines can be hydroxylated prior to their incorporation into the peptide. Varying extents of methylation then lead to the formation of leucinostatins A and B. This is Highly reducing polyketide synthase lcsB from Purpureocillium lilacinum (Paecilomyces lilacinus).